Here is a 240-residue protein sequence, read N- to C-terminus: Probable transcriptional regulatory protein HPG27_148 (240 aa).

It belongs to the TACO1 family.

It localises to the cytoplasm. This is Probable transcriptional regulatory protein HPG27_148 from Helicobacter pylori (strain G27).